Here is a 434-residue protein sequence, read N- to C-terminus: Alpha-enolase (434 aa).

Ser-40 contributes to the Mg(2+) binding site. The substrate site is built by His-158 and Glu-167. Glu-210 acts as the Proton donor in catalysis. Mg(2+)-binding residues include Asp-245, Glu-293, and Asp-318. Positions 293 and 318 each coordinate substrate. Lys-343 (proton acceptor) is an active-site residue. Residues 370 to 373 and Lys-394 contribute to the substrate site; that span reads SHRS.

Belongs to the enolase family. In terms of assembly, homodimer. Requires Mg(2+) as cofactor.

The protein localises to the cytoplasm. It carries out the reaction (2R)-2-phosphoglycerate = phosphoenolpyruvate + H2O. Its pathway is carbohydrate degradation; glycolysis; pyruvate from D-glyceraldehyde 3-phosphate: step 4/5. The chain is Alpha-enolase from Alligator mississippiensis (American alligator).